Here is a 411-residue protein sequence, read N- to C-terminus: Phospholipase ABHD3 (411 aa).

A helical; Signal-anchor for type II membrane protein membrane pass occupies residues Val-25 to Ala-45. The AB hydrolase-1 domain occupies Pro-140–Val-247. Active-site charge relay system residues include Ser-220, Asp-346, and His-375.

This sequence belongs to the AB hydrolase superfamily. AB hydrolase 4 family.

Its subcellular location is the membrane. It catalyses the reaction a 1,2-diacyl-sn-glycero-3-phosphocholine + H2O = a 1-acyl-sn-glycero-3-phosphocholine + a fatty acid + H(+). The catalysed reaction is a 1,2-diacyl-sn-glycero-3-phosphocholine + H2O = a 2-acyl-sn-glycero-3-phosphocholine + a fatty acid + H(+). The enzyme catalyses 1-tetradecanoyl-2-(9Z,12Z-octadecadienoyl)-sn-glycero-3-phosphocholine + H2O = 2-(9Z,12Z-octadecadienoyl)-sn-glycero-3-phosphocholine + tetradecanoate + H(+). It carries out the reaction 1-tetradecanoyl-2-(9Z,12Z-octadecadienoyl)-sn-glycero-3-phosphocholine + H2O = 1-tetradecanoyl-sn-glycero-3-phosphocholine + (9Z,12Z)-octadecadienoate + H(+). It catalyses the reaction 1-tetradecanoyl-2-(5Z,8Z,11Z,14Z-eicosatetraenoyl)-sn-glycero-3-phosphocholine + H2O = 2-(5Z,8Z,11Z,14Z)-eicosatetraenoyl-sn-glycero-3-phosphocholine + tetradecanoate + H(+). The catalysed reaction is 1-tetradecanoyl-2-(4Z,7Z,10Z,13Z,16Z,19Z-docosahexaenoyl)-sn-glycero-3-phosphocholine + H2O = 2-(4Z,7Z,10Z,13Z,16Z,19Z-docosahexaenoyl)-sn-glycero-3-phosphocholine + tetradecanoate + H(+). The enzyme catalyses 1,2-ditetradecanoyl-sn-glycero-3-phosphocholine + H2O = 2-tetradecanoyl-sn-glycero-3-phosphocholine + tetradecanoate + H(+). It carries out the reaction 1-octadecanoyl-2-acetyl-sn-glycero-3-phosphocholine + H2O = 1-octadecanoyl-sn-glycero-3-phosphocholine + acetate + H(+). It catalyses the reaction 1,2-ditetradecanoyl-sn-glycero-3-phosphocholine + H2O = 1-tetradecanoyl-sn-glycero-3-phosphocholine + tetradecanoate + H(+). The catalysed reaction is 1-octadecanoyl-2-pentanoyl-sn-glycero-3-phosphocholine + H2O = pentanoate + 1-octadecanoyl-sn-glycero-3-phosphocholine + H(+). The enzyme catalyses 1-octadecanoyl-2-hexanoyl-sn-glycero-3-phosphocholine + H2O = hexanoate + 1-octadecanoyl-sn-glycero-3-phosphocholine + H(+). It carries out the reaction 1-octadecanoyl-2-octanoyl-sn-glycero-3-phosphocholine + H2O = 1-octadecanoyl-sn-glycero-3-phosphocholine + octanoate + H(+). It catalyses the reaction 1-octadecanoyl-2-nonanoyl-sn-glycero-3-phosphocholine + H2O = nonanoate + 1-octadecanoyl-sn-glycero-3-phosphocholine + H(+). The catalysed reaction is 1-O-hexadecyl-2-nonadioyl-sn-glycero-3-phosphocholine + H2O = nonanedioate + 1-O-hexadecyl-sn-glycero-3-phosphocholine + H(+). The enzyme catalyses 1-hexadecanoyl-2-nonadioyl-sn-glycero-3-phosphocholine + H2O = nonanedioate + 1-hexadecanoyl-sn-glycero-3-phosphocholine + H(+). It carries out the reaction 1-hexadecanoyl-2-(9-oxononanoyl)-sn-glycero-3-phosphocholine + H2O = 9-oxononanoate + 1-hexadecanoyl-sn-glycero-3-phosphocholine + H(+). It catalyses the reaction 1-hexadecanoyl-2-(5-oxopentanoyl)-sn-glycero-3-phosphocholine + H2O = 5-oxopentanoate + 1-hexadecanoyl-sn-glycero-3-phosphocholine + H(+). The catalysed reaction is 1-hexadecanoyl-2-glutaroyl-sn-glycero-3-phosphocholine + H2O = glutarate + 1-hexadecanoyl-sn-glycero-3-phosphocholine + H(+). The enzyme catalyses 1-O-hexadecyl-2-acetyl-sn-glycero-3-phosphocholine + H2O = 1-O-hexadecyl-sn-glycero-3-phosphocholine + acetate + H(+). Phospholipase that may play a role in phospholipids remodeling. May selectively cleave myristate (C14)-containing phosphatidylcholines through its predominant phospholipase 1 activity, cleaving preferentially acyl groups in sn1 position. In parallel, may have a minor phospholipase 2 activity acting on acyl groups in position sn2. In addition to (C14)-containing phosphatidylcholines, may also act on other medium-chain-containing and oxidatively truncated phospholipids. This is Phospholipase ABHD3 from Bos taurus (Bovine).